The chain runs to 540 residues: Fumonisin B1 esterase (540 aa).

Serine 240 acts as the Acyl-ester intermediate in catalysis. Residues glutamate 356 and histidine 448 each act as charge relay system in the active site. The segment at glutamine 521–lysine 540 is disordered.

The protein belongs to the type-B carboxylesterase/lipase family.

The enzyme catalyses fumonisin B1 + 2 H2O = 2 tricarballylate + (2S,3S,5R,10R,12S,14S,15R,16R)-2-amino-12,16-dimethylicosane-3,5,10,14,15-pentol + 2 H(+). In terms of biological role, involved in degradation of fumonisin B1. Catalyzes the hydrolysis of fumonisin B1 (FB1) to aminopentol (HFB1). The polypeptide is Fumonisin B1 esterase (fumD) (Sphingopyxis macrogoltabida (Sphingomonas macrogoltabidus)).